A 376-amino-acid polypeptide reads, in one-letter code: Succinyl-diaminopimelate desuccinylase (376 aa).

His66 lines the Zn(2+) pocket. The active site involves Asp68. Zn(2+) is bound at residue Asp99. The active-site Proton acceptor is Glu133. Positions 134, 162, and 348 each coordinate Zn(2+).

It belongs to the peptidase M20A family. DapE subfamily. In terms of assembly, homodimer. Zn(2+) serves as cofactor. It depends on Co(2+) as a cofactor.

The enzyme catalyses N-succinyl-(2S,6S)-2,6-diaminopimelate + H2O = (2S,6S)-2,6-diaminopimelate + succinate. Its pathway is amino-acid biosynthesis; L-lysine biosynthesis via DAP pathway; LL-2,6-diaminopimelate from (S)-tetrahydrodipicolinate (succinylase route): step 3/3. In terms of biological role, catalyzes the hydrolysis of N-succinyl-L,L-diaminopimelic acid (SDAP), forming succinate and LL-2,6-diaminopimelate (DAP), an intermediate involved in the bacterial biosynthesis of lysine and meso-diaminopimelic acid, an essential component of bacterial cell walls. The polypeptide is Succinyl-diaminopimelate desuccinylase (Nitrosococcus oceani (strain ATCC 19707 / BCRC 17464 / JCM 30415 / NCIMB 11848 / C-107)).